The primary structure comprises 280 residues: 1-cyclohexenylcarbonyl-CoA reductase (280 aa).

NADP(+) contacts are provided by residues 22–25, 71–72, and Asn98; these read SRGI and DV. Active-site proton acceptor residues include Tyr158 and Lys165. NADP(+) contacts are provided by residues Lys165 and 194-196; that span reads IDS.

This sequence belongs to the short-chain dehydrogenases/reductases (SDR) family. As to quaternary structure, homodimer.

The catalysed reaction is (4R,5R)-4,5-dihydroxycyclohex-2-ene-1-carbonyl-CoA + NADP(+) = (3R,4R)-3,4-dihydroxycyclohexa-1,5-diene-1-carbonyl-CoA + NADPH + H(+). It catalyses the reaction (3S)-3-hydroxycyclohexane-1-carbonyl-CoA + NADP(+) = (5S)-5-hydroxycyclohex-1-ene-1-carbonyl-CoA + NADPH + H(+). The enzyme catalyses cyclohexane-1-carbonyl-CoA + NADP(+) = cyclohex-1-ene-1-carbonyl-CoA + NADPH + H(+). It functions in the pathway antibiotic biosynthesis. With respect to regulation, inhibited by the thiol inhibitors p-chloromercuribenzoate, N-ethylmaleimide and iodoacetamide. Also inhibited by various divalent cations. In terms of biological role, involved in the biosynthesis of the antifungal antibiotic ansatrienin A (mycotrienin I). Catalyzes three of the reductive steps involved in the formation of the cyclohexanecarboxylic acid (CHC) moiety of ansatrienin from shikimic acid. Can use 3,4-dihydroxycyclohexa-1,5-diene-1-carbonyl-CoA, 5-hydroxycyclohex-1-ene-1-carbonyl-CoA and cyclohex-1-ene-1-carbonyl-CoA as substrates. This chain is 1-cyclohexenylcarbonyl-CoA reductase, found in Streptomyces collinus.